The sequence spans 842 residues: Protein P (842 aa).

Residues 1 to 177 are terminal protein domain (TP); that stretch reads MPLSYQHFRR…FCGSPYTWEQ (177 aa). A spacer region spans residues 178–345; the sequence is DLQHGAFLDG…YCLSHLVNLL (168 aa). The segment at 184–238 is disordered; it reads FLDGPSRVGKEPFHQQSSRIPSRSPVGPSIQSKYQQSRLGLQSQKGPLARGQQGR. The span at 212–228 shows a compositional bias: polar residues; it reads SIQSKYQQSRLGLQSQK. Residues 346 to 689 form a polymerase/reverse transcriptase domain (RT) region; sequence QDWGPCTEHG…YMNLYPVARQ (344 aa). In terms of domain architecture, Reverse transcriptase spans 356 to 599; that stretch reads EYHIRIPRTP…YSLNFMGYVI (244 aa). Mg(2+) is bound by residues D428, D550, and D551.

The protein belongs to the hepadnaviridae P protein family.

It carries out the reaction DNA(n) + a 2'-deoxyribonucleoside 5'-triphosphate = DNA(n+1) + diphosphate. The enzyme catalyses Endonucleolytic cleavage to 5'-phosphomonoester.. Its activity is regulated as follows. Activated by host HSP70 and HSP40 in vitro to be able to bind the epsilon loop of the pgRNA. Because deletion of the RNase H region renders the protein partly chaperone-independent, the chaperones may be needed indirectly to relieve occlusion of the RNA-binding site by this domain. Inhibited by several reverse-transcriptase inhibitors: Lamivudine, Adefovir and Entecavir. Its function is as follows. Multifunctional enzyme that converts the viral RNA genome into dsDNA in viral cytoplasmic capsids. This enzyme displays a DNA polymerase activity that can copy either DNA or RNA templates, and a ribonuclease H (RNase H) activity that cleaves the RNA strand of RNA-DNA heteroduplexes in a partially processive 3'- to 5'-endonucleasic mode. Neo-synthesized pregenomic RNA (pgRNA) are encapsidated together with the P protein, and reverse-transcribed inside the nucleocapsid. Initiation of reverse-transcription occurs first by binding the epsilon loop on the pgRNA genome, and is initiated by protein priming, thereby the 5'-end of (-)DNA is covalently linked to P protein. Partial (+)DNA is synthesized from the (-)DNA template and generates the relaxed circular DNA (RC-DNA) genome. After budding and infection, the RC-DNA migrates in the nucleus, and is converted into a plasmid-like covalently closed circular DNA (cccDNA). The activity of P protein does not seem to be necessary for cccDNA generation, and is presumably released from (+)DNA by host nuclear DNA repair machinery. The sequence is that of Protein P from Hepatitis B virus genotype G (isolate United States/USG17/2002) (HBV-G).